Here is a 473-residue protein sequence, read N- to C-terminus: GTPase Der (473 aa).

EngA-type G domains are found at residues Leu3–Lys167 and Ile204–Asn379. GTP-binding positions include Gly9–Ser16, Asp56–Leu60, Asn119–Glu122, Gly210–Ser217, Asp257–Leu261, and Asn322–Asp325. One can recognise a KH-like domain in the interval Arg380 to Asp464.

This sequence belongs to the TRAFAC class TrmE-Era-EngA-EngB-Septin-like GTPase superfamily. EngA (Der) GTPase family. As to quaternary structure, associates with the 50S ribosomal subunit.

GTPase that plays an essential role in the late steps of ribosome biogenesis. This chain is GTPase Der, found in Bartonella bacilliformis (strain ATCC 35685 / KC583 / Herrer 020/F12,63).